Here is a 372-residue protein sequence, read N- to C-terminus: L-selectin (372 aa).

The N-terminal stretch at 1-28 (MIFPWKCQSTQRDLCNIFKLWGWTMLCC) is a signal peptide. Residues 29 to 38 (DFLAHHGTDC) constitute a propeptide that is removed on maturation. Topologically, residues 39 to 332 (WTYHYSEKPM…FSMIKEGDYN (294 aa)) are extracellular. The region spanning 55-155 (RFCRENYTDL…ACHKLKAALC (101 aa)) is the C-type lectin domain. 10 cysteine pairs are disulfide-bonded: Cys57–Cys155, Cys128–Cys147, Cys128–Cys160, Cys160–Cys171, Cys165–Cys180, Cys182–Cys191, Cys197–Cys241, Cys227–Cys254, Cys259–Cys303, and Cys289–Cys316. Residues Asn60 and Asn104 are each glycosylated (N-linked (GlcNAc...) asparagine). Ca(2+) contacts are provided by Glu118, Asn120, Glu126, Asn143, and Asp144. The EGF-like domain occupies 156 to 192 (YTASCQPWSCSGHGECVEIINNYTCNCDVGYYGPQCQ). Asn177 carries N-linked (GlcNAc...) asparagine glycosylation. Sushi domains are found at residues 195–256 (IQCE…TCQV) and 257–318 (IQCE…ICQK). 5 N-linked (GlcNAc...) asparagine glycosylation sites follow: Asn216, Asn226, Asn232, Asn246, and Asn271. The chain crosses the membrane as a helical span at residues 333–355 (PLFIPVAVMVTAFSGLAFIIWLA). Topologically, residues 356 to 372 (RRLKKGKKSKKSMDDPY) are cytoplasmic.

It belongs to the selectin/LECAM family. In terms of assembly, interaction with SELPLG/PSGL1 and PODXL2 is required for promoting recruitment and rolling of leukocytes. This interaction is dependent on the sialyl Lewis X glycan modification of SELPLG and PODXL2, and tyrosine sulfation modifications of SELPLG. Sulfation on 'Tyr-51' of SELPLG is important for L-selectin binding. In terms of processing, N-glycosylated.

The protein resides in the cell membrane. Its function is as follows. Calcium-dependent lectin that mediates cell adhesion by binding to glycoproteins on neighboring cells. Mediates the adherence of lymphocytes to endothelial cells of high endothelial venules in peripheral lymph nodes. Promotes initial tethering and rolling of leukocytes in endothelia. This Pongo pygmaeus (Bornean orangutan) protein is L-selectin (SELL).